The primary structure comprises 158 residues: Heavy metal-associated isoprenylated plant protein 23 (158 aa).

One can recognise an HMA domain in the interval 31–94; the sequence is FQTVELKVRM…KAKATGKKAE (64 aa). 2 residues coordinate a metal cation: Cys42 and Cys45. Cysteine methyl ester is present on Cys155. Cys155 carries the S-farnesyl cysteine lipid modification. Positions 156–158 are cleaved as a propeptide — removed in mature form; the sequence is SIM.

It belongs to the HIPP family. As to quaternary structure, interacts with ZHD11/HB29.

In terms of biological role, heavy-metal-binding protein. The chain is Heavy metal-associated isoprenylated plant protein 23 from Arabidopsis thaliana (Mouse-ear cress).